A 474-amino-acid polypeptide reads, in one-letter code: CUGBP Elav-like family member 4 (474 aa).

The sufficient for RNA-binding and MSE-dependent splicing activity stretch occupies residues 1-287; the sequence is MYIKMATLAN…AAFAAAQMQQ (287 aa). Over residues 18–28 the composition is skewed to polar residues; the sequence is LSTNGLGSSPG. A disordered region spans residues 18 to 41; that stretch reads LSTNGLGSSPGSAGHMNGLSHSPG. RRM domains lie at 54 to 135 and 141 to 221; these read IKLF…PADS and RKLF…FADT. A necessary for TNNT2 exon 5 inclusion region spans residues 228–247; the sequence is RRMQQMAGQMGMFNPMAIPF. An RRM 3 domain is found at 392–467; that stretch reads PQPPPMIPQQ…KRLKVQLKRP (76 aa).

This sequence belongs to the CELF/BRUNOL family.

The protein resides in the nucleus. Its subcellular location is the cytoplasm. Its function is as follows. RNA-binding protein implicated in the regulation of pre-mRNA alternative splicing. Mediates exon inclusion and/or exclusion in pre-mRNA that are subject to tissue-specific and developmentally regulated alternative splicing. Specifically activates exon 5 inclusion of cardiac isoforms of TNNT2 during heart remodeling at the juvenile to adult transition. Promotes exclusion of both the smooth muscle (SM) and non-muscle (NM) exons in actinin pre-mRNAs. Activates the splicing of MAPT/Tau exon 10. Binds to muscle-specific splicing enhancer (MSE) intronic sites flanking the alternative exon 5 of TNNT2 pre-mRNA. This chain is CUGBP Elav-like family member 4 (CELF4), found in Macaca fascicularis (Crab-eating macaque).